A 900-amino-acid chain; its full sequence is DNA mismatch repair protein MutS (900 aa).

The disordered stretch occupies residues 1-88 (MPGPSDDPTE…PAWAHHSQVD (88 aa)). A compositionally biased stretch (basic and acidic residues) spans 56 to 68 (APADHNAADHDSN). Position 714–721 (714–721 (GPNASGKS)) interacts with ATP.

Belongs to the DNA mismatch repair MutS family.

This protein is involved in the repair of mismatches in DNA. It is possible that it carries out the mismatch recognition step. This protein has a weak ATPase activity. The chain is DNA mismatch repair protein MutS from Parasynechococcus marenigrum (strain WH8102).